We begin with the raw amino-acid sequence, 51 residues long: Large ribosomal subunit protein eL39 (51 aa).

Residues 32–51 form a disordered region; it reads KRRVTRSPTRRHWRRVKLKA.

This sequence belongs to the eukaryotic ribosomal protein eL39 family.

In Pyrobaculum arsenaticum (strain DSM 13514 / JCM 11321 / PZ6), this protein is Large ribosomal subunit protein eL39.